A 154-amino-acid chain; its full sequence is Interleukin-2 (154 aa).

The N-terminal stretch at 1 to 20 is a signal peptide; it reads MCKMQLLSCIALSLVLVANS. Residue threonine 23 is glycosylated (O-linked (GalNAc...) threonine). A disulfide bridge links cysteine 78 with cysteine 126.

It belongs to the IL-2 family.

The protein resides in the secreted. Its function is as follows. Cytokine produced by activated CD4-positive helper T-cells and to a lesser extend activated CD8-positive T-cells and natural killer (NK) cells that plays pivotal roles in the immune response and tolerance. Binds to a receptor complex composed of either the high-affinity trimeric IL-2R (IL2RA/CD25, IL2RB/CD122 and IL2RG/CD132) or the low-affinity dimeric IL-2R (IL2RB and IL2RG). Interaction with the receptor leads to oligomerization and conformation changes in the IL-2R subunits resulting in downstream signaling starting with phosphorylation of JAK1 and JAK3. In turn, JAK1 and JAK3 phosphorylate the receptor to form a docking site leading to the phosphorylation of several substrates including STAT5. This process leads to activation of several pathways including STAT, phosphoinositide-3-kinase/PI3K and mitogen-activated protein kinase/MAPK pathways. Functions as a T-cell growth factor and can increase NK-cell cytolytic activity as well. Promotes strong proliferation of activated B-cells and subsequently immunoglobulin production. Plays a pivotal role in regulating the adaptive immune system by controlling the survival and proliferation of regulatory T-cells, which are required for the maintenance of immune tolerance. Moreover, participates in the differentiation and homeostasis of effector T-cell subsets, including Th1, Th2, Th17 as well as memory CD8-positive T-cells. This is Interleukin-2 (IL2) from Mirounga angustirostris (Northern elephant seal).